The sequence spans 540 residues: DM7 family protein GM11956 (540 aa).

The interval 416–443 (ATDTRGRDEIRTSCDQPQEKDEGSAEAD) is disordered. The span at 417-443 (TDTRGRDEIRTSCDQPQEKDEGSAEAD) shows a compositional bias: basic and acidic residues.

Belongs to the DM7 family.

The polypeptide is DM7 family protein GM11956 (Drosophila sechellia (Fruit fly)).